The primary structure comprises 185 residues: MINDILKDAENRMKKSLEVLADDLAKIRTGRAQPDLLAHVTIDYYGVETPITQAANITVLDARTLGITPWEKGLSSKIEKAILTSDLGLNPTNLGDSLRVPMPALNEERRKELVKLVKSETEAGRVSIRNIRRDANGDIKELLKEKEITEDQAKKAEDDIQKITDKMIAQADALAAKKEQDLMAV.

The protein belongs to the RRF family.

The protein resides in the cytoplasm. Responsible for the release of ribosomes from messenger RNA at the termination of protein biosynthesis. May increase the efficiency of translation by recycling ribosomes from one round of translation to another. In Francisella tularensis subsp. tularensis (strain FSC 198), this protein is Ribosome-recycling factor.